A 424-amino-acid polypeptide reads, in one-letter code: L-glutamine:2-deoxy-scyllo-inosose aminotransferase (424 aa).

Lys202 is subject to N6-(pyridoxal phosphate)lysine.

It belongs to the DegT/DnrJ/EryC1 family. L-glutamine:2-deoxy-scyllo-inosose/scyllo-inosose aminotransferase subfamily. The cofactor is pyridoxal 5'-phosphate.

It carries out the reaction 2-deoxy-L-scyllo-inosose + L-glutamine = 2-deoxy-scyllo-inosamine + 2-oxoglutaramate. The catalysed reaction is 3-amino-2,3-dideoxy-scyllo-inosose + L-glutamine = 2-deoxystreptamine + 2-oxoglutaramate. It functions in the pathway metabolic intermediate biosynthesis; 2-deoxystreptamine biosynthesis; 2-deoxystreptamine from D-glucose 6-phosphate: step 2/4. Its pathway is antibiotic biosynthesis; lividomycin biosynthesis. In terms of biological role, catalyzes the PLP-dependent transamination of 2-deoxy-scyllo-inosose (2-DOI) to form 2-deoxy-scyllo-inosamine (2-DOIA) using L-glutamine as the amino donor. Also catalyzes the transamination of 3-amino-2,3-dideoxy-scyllo-inosose (keto-2-DOIA) into 2-deoxystreptamine (2-DOS). This Streptomyces lividus protein is L-glutamine:2-deoxy-scyllo-inosose aminotransferase (livS).